Consider the following 238-residue polypeptide: Protein shisa-3 homolog (238 aa).

Positions 1–21 are cleaved as a signal peptide; sequence MRALLALCLLLGWLRWGPAGA. Over 22–98 the chain is Lumenal; it reads QQSGEYCHGW…GITAQPVYVP (77 aa). Residues 99–119 traverse the membrane as a helical segment; the sequence is FLIVGSIFIAFIILGSVVAIY. Topologically, residues 120 to 238 are cytoplasmic; sequence CCTCLRPKEP…GKSCPDFSSS (119 aa). The tract at residues 151-173 is disordered; that stretch reads TSTSPRAPSRQSSTATSSSSTGG. Residues 159–173 are compositionally biased toward low complexity; it reads SRQSSTATSSSSTGG.

It belongs to the shisa family.

Its subcellular location is the endoplasmic reticulum membrane. Functionally, plays an essential role in the maturation of presomitic mesoderm cells by individual attenuation of both FGF and WNT signaling. The sequence is that of Protein shisa-3 homolog (SHISA3) from Homo sapiens (Human).